We begin with the raw amino-acid sequence, 355 residues long: Heavy metal-associated isoprenylated plant protein 7 (355 aa).

A compositionally biased stretch (basic and acidic residues) spans 1–58 (MGEEEKKPEAAEEKKMEEKKPEEKKEGEDKKVDAEKKGEDSDKKPQEGESNKDSKEDS). Residues 1–74 (MGEEEKKPEA…APAPPPPPQE (74 aa)) form a disordered region. The span at 63-73 (PEAPAPPPPPQ) shows a compositional bias: pro residues. HMA domains lie at 72-136 (PQEV…HRQV) and 170-234 (VVTV…KHAA). C83 and C86 together coordinate a metal cation. The disordered stretch occupies residues 132-157 (THRQVQLLSPIPPPPPPPEKKAEEDK). A metal cation-binding residues include C181 and C184. Residues 235-308 (IMKIDPPPPP…GGGEEEGKVV (74 aa)) form a disordered region. The segment covering 254–293 (EGEKKEEEKGEGESKGEEGKDDKAKTDEEKKEGDGGKGEG) has biased composition (basic and acidic residues). At C352 the chain carries Cysteine methyl ester. Residue C352 is the site of S-farnesyl cysteine attachment. A propeptide spans 353-355 (TVM) (removed in mature form).

This sequence belongs to the HIPP family. In terms of processing, efficiently farnesylated in vitro.

Functionally, heavy-metal-binding protein. Binds zinc, copper and nickel in a reversible manner. The protein is Heavy metal-associated isoprenylated plant protein 7 of Arabidopsis thaliana (Mouse-ear cress).